A 280-amino-acid polypeptide reads, in one-letter code: Secreted RxLR effector protein 39 (280 aa).

The N-terminal stretch at 1–19 is a signal peptide; that stretch reads MRGAYYVAIALLIVASCSA. The RxLR-dEER motif lies at 49 to 70; the sequence is RVLRGSRDLKNKWAVHAGGEDR. Residues 229-249 form a disordered region; it reads EVKARSSKRQRTNPMLNNMDG.

Belongs to the RxLR effector family.

It is found in the secreted. The protein resides in the host nucleus. In terms of biological role, secreted effector that completely suppresses the host cell death induced by cell death-inducing proteins. This is Secreted RxLR effector protein 39 from Plasmopara viticola (Downy mildew of grapevine).